The chain runs to 200 residues: uncharacterized protein (200 aa).

The chain crosses the membrane as a helical span at residues 7-29; it reads FFFLFSFISHAMMLTGLIGSSSF.

Its subcellular location is the membrane. This is an uncharacterized protein from Saccharomyces cerevisiae (strain ATCC 204508 / S288c) (Baker's yeast).